The chain runs to 321 residues: Phosphate acyltransferase (321 aa).

The protein belongs to the PlsX family. Homodimer. Probably interacts with PlsY.

The protein localises to the cytoplasm. It carries out the reaction a fatty acyl-[ACP] + phosphate = an acyl phosphate + holo-[ACP]. Its pathway is lipid metabolism; phospholipid metabolism. Functionally, catalyzes the reversible formation of acyl-phosphate (acyl-PO(4)) from acyl-[acyl-carrier-protein] (acyl-ACP). This enzyme utilizes acyl-ACP as fatty acyl donor, but not acyl-CoA. The polypeptide is Phosphate acyltransferase (Chlamydia trachomatis serovar L2 (strain ATCC VR-902B / DSM 19102 / 434/Bu)).